The primary structure comprises 156 residues: MKKVRLTREGYEKLKKELEDLKRKFMYEISERIKEARELGDLSENSEYEAAKNEQGRVGSRIMEIEQILSNAEIIEDSEESDEVTLGKWVVIKNLDTGEEHKFRIVTPQEADFFAQKLSSDSPLGKSLLGRKVGDVVKVKAPSGVQRYQVIAVMNK.

Residues 1–32 adopt a coiled-coil conformation; the sequence is MKKVRLTREGYEKLKKELEDLKRKFMYEISER.

This sequence belongs to the GreA/GreB family.

In terms of biological role, necessary for efficient RNA polymerase transcription elongation past template-encoded arresting sites. The arresting sites in DNA have the property of trapping a certain fraction of elongating RNA polymerases that pass through, resulting in locked ternary complexes. Cleavage of the nascent transcript by cleavage factors such as GreA or GreB allows the resumption of elongation from the new 3'terminus. GreA releases sequences of 2 to 3 nucleotides. The polypeptide is Transcription elongation factor GreA (Thermotoga maritima (strain ATCC 43589 / DSM 3109 / JCM 10099 / NBRC 100826 / MSB8)).